The sequence spans 377 residues: Probable glucokinase 2 (377 aa).

27–32 (CDVGGS) is an ATP binding site.

It belongs to the bacterial glucokinase family.

It catalyses the reaction D-glucose + ATP = D-glucose 6-phosphate + ADP + H(+). This is Probable glucokinase 2 (GK2) from Trichomonas vaginalis.